The primary structure comprises 58 residues: Large ribosomal subunit protein bL32 (58 aa).

This sequence belongs to the bacterial ribosomal protein bL32 family.

This chain is Large ribosomal subunit protein bL32, found in Caldicellulosiruptor bescii (strain ATCC BAA-1888 / DSM 6725 / KCTC 15123 / Z-1320) (Anaerocellum thermophilum).